The following is a 544-amino-acid chain: Putative cysteine ligase BshC (544 aa).

Residues 431–463 (LNDTCRTIKEEHEKFIQELSRLDEKIYDFEEKN) are a coiled coil.

Belongs to the BshC family.

Its function is as follows. Involved in bacillithiol (BSH) biosynthesis. May catalyze the last step of the pathway, the addition of cysteine to glucosamine malate (GlcN-Mal) to generate BSH. The polypeptide is Putative cysteine ligase BshC (Natranaerobius thermophilus (strain ATCC BAA-1301 / DSM 18059 / JW/NM-WN-LF)).